Reading from the N-terminus, the 433-residue chain is ATP-dependent protease ATPase subunit HslU (433 aa).

Residues isoleucine 18, 60 to 65 (GVGKTE), aspartate 246, glutamate 311, and arginine 383 contribute to the ATP site.

It belongs to the ClpX chaperone family. HslU subfamily. A double ring-shaped homohexamer of HslV is capped on each side by a ring-shaped HslU homohexamer. The assembly of the HslU/HslV complex is dependent on binding of ATP.

It localises to the cytoplasm. Its function is as follows. ATPase subunit of a proteasome-like degradation complex; this subunit has chaperone activity. The binding of ATP and its subsequent hydrolysis by HslU are essential for unfolding of protein substrates subsequently hydrolyzed by HslV. HslU recognizes the N-terminal part of its protein substrates and unfolds these before they are guided to HslV for hydrolysis. The chain is ATP-dependent protease ATPase subunit HslU from Cereibacter sphaeroides (strain ATCC 17025 / ATH 2.4.3) (Rhodobacter sphaeroides).